The primary structure comprises 150 residues: Monothiol glutaredoxin-S13 (150 aa).

The disordered stretch occupies residues 30 to 52; the sequence is PSSSSSSLSWLTSGSPKPTSISN. Residues 31–44 are compositionally biased toward low complexity; the sequence is SSSSSSLSWLTSGS. The 97-residue stretch at 53 to 149 folds into the Glutaredoxin domain; that stretch reads KRSSNLVVME…PTLRQAGALW (97 aa). Cysteine 73 contacts [2Fe-2S] cluster. Positions 147–150 match the Responsive for interaction with TGA factors motif; it reads ALWL.

This sequence belongs to the glutaredoxin family. CC-type subfamily.

The protein localises to the cytoplasm. The protein resides in the nucleus. Its function is as follows. May only reduce GSH-thiol disulfides, but not protein disulfides. The polypeptide is Monothiol glutaredoxin-S13 (GRXS13) (Arabidopsis thaliana (Mouse-ear cress)).